Consider the following 134-residue polypeptide: Small ribosomal subunit protein uS12 (134 aa).

The tract at residues 1–27 is disordered; the sequence is MPTIQQLVRKGRESFADKSKSPALNSC. Residues 10–20 show a composition bias toward basic and acidic residues; it reads KGRESFADKSK. Position 89 is a 3-methylthioaspartic acid (D89). Residues 103 to 134 form a disordered region; the sequence is DTAGVNGRTQRRSKYGAKRPKPGQAPAAKGKK. Residues 111-123 show a composition bias toward basic residues; it reads TQRRSKYGAKRPK. The span at 124-134 shows a compositional bias: low complexity; that stretch reads PGQAPAAKGKK.

This sequence belongs to the universal ribosomal protein uS12 family. As to quaternary structure, part of the 30S ribosomal subunit. Contacts proteins S8 and S17. May interact with IF1 in the 30S initiation complex.

Functionally, with S4 and S5 plays an important role in translational accuracy. Interacts with and stabilizes bases of the 16S rRNA that are involved in tRNA selection in the A site and with the mRNA backbone. Located at the interface of the 30S and 50S subunits, it traverses the body of the 30S subunit contacting proteins on the other side and probably holding the rRNA structure together. The combined cluster of proteins S8, S12 and S17 appears to hold together the shoulder and platform of the 30S subunit. The polypeptide is Small ribosomal subunit protein uS12 (Porphyromonas gingivalis (strain ATCC 33277 / DSM 20709 / CIP 103683 / JCM 12257 / NCTC 11834 / 2561)).